We begin with the raw amino-acid sequence, 453 residues long: Ribulose bisphosphate carboxylase large chain (453 aa).

Residues 1–2 constitute a propeptide that is removed on maturation; it reads MS. An N-acetylproline modification is found at proline 3. N6,N6,N6-trimethyllysine is present on lysine 14. Substrate contacts are provided by asparagine 123 and threonine 173. Residue lysine 175 is the Proton acceptor of the active site. Lysine 177 provides a ligand contact to substrate. Mg(2+)-binding residues include lysine 201, aspartate 203, and glutamate 204. At lysine 201 the chain carries N6-carboxylysine. The active-site Proton acceptor is the histidine 294. Residues arginine 295, histidine 327, and serine 379 each contribute to the substrate site.

Belongs to the RuBisCO large chain family. Type I subfamily. Heterohexadecamer of 8 large chains and 8 small chains; disulfide-linked. The disulfide link is formed within the large subunit homodimers. The cofactor is Mg(2+). The disulfide bond which can form in the large chain dimeric partners within the hexadecamer appears to be associated with oxidative stress and protein turnover.

It localises to the plastid. The protein localises to the chloroplast. The enzyme catalyses 2 (2R)-3-phosphoglycerate + 2 H(+) = D-ribulose 1,5-bisphosphate + CO2 + H2O. The catalysed reaction is D-ribulose 1,5-bisphosphate + O2 = 2-phosphoglycolate + (2R)-3-phosphoglycerate + 2 H(+). RuBisCO catalyzes two reactions: the carboxylation of D-ribulose 1,5-bisphosphate, the primary event in carbon dioxide fixation, as well as the oxidative fragmentation of the pentose substrate in the photorespiration process. Both reactions occur simultaneously and in competition at the same active site. This chain is Ribulose bisphosphate carboxylase large chain, found in Sherardia arvensis (Blue field-madder).